A 247-amino-acid polypeptide reads, in one-letter code: tRNA uridine(34) hydroxylase (247 aa).

The Rhodanese domain occupies 124–218 (TKQDVIVIDT…YLEDTQNKNN (95 aa)). Cysteine 178 acts as the Cysteine persulfide intermediate in catalysis.

It belongs to the TrhO family.

The catalysed reaction is uridine(34) in tRNA + AH2 + O2 = 5-hydroxyuridine(34) in tRNA + A + H2O. Catalyzes oxygen-dependent 5-hydroxyuridine (ho5U) modification at position 34 in tRNAs. The chain is tRNA uridine(34) hydroxylase from Rickettsia rickettsii (strain Iowa).